A 384-amino-acid chain; its full sequence is MPKHLPADSVGIVEQHSLHFDEPLPLDCGRSLPAYDLVYETYGELNAERSNAILICHALSGSHHAAGYHSEEDRKPGWWEACVGPGKPIDTDRFYVVCCNNLGGCHGSTGPSSINPETHRPYGPDFPLVTVRDWVHSQARLADALGIERWAAVVGGSLGGMQAIQWAIDYPDRLGHVVAIAVAPRLSAQNIGFNEVARQAILTDPEFHGGRYYEHHTVPRRGLALARMLGHITYLSDDAMRDKFGRDLRADGGRYKFNFDVEFEVESYLRYQGRSFVDRFDANTYLLMTKVLDYFDPAAEYDHDLSAALAHVQARFLLISFSSDWRFPPERSREIVRALEDNQKPISYLEVETSQGHDAFLKPIPVYTEAFRAYMQGIAREVGA.

Positions 51 to 361 constitute an AB hydrolase-1 domain; the sequence is NAILICHALS…ETSQGHDAFL (311 aa). Serine 157 acts as the Nucleophile in catalysis. Arginine 227 contacts substrate. Residues aspartate 324 and histidine 357 contribute to the active site. Aspartate 358 lines the substrate pocket.

Belongs to the AB hydrolase superfamily. MetX family. Homodimer.

The protein resides in the cytoplasm. The enzyme catalyses L-homoserine + succinyl-CoA = O-succinyl-L-homoserine + CoA. The protein operates within amino-acid biosynthesis; L-methionine biosynthesis via de novo pathway; O-succinyl-L-homoserine from L-homoserine: step 1/1. In terms of biological role, transfers a succinyl group from succinyl-CoA to L-homoserine, forming succinyl-L-homoserine. In Alkalilimnicola ehrlichii (strain ATCC BAA-1101 / DSM 17681 / MLHE-1), this protein is Homoserine O-succinyltransferase.